The sequence spans 82 residues: Small ribosomal subunit protein uS17 (82 aa).

The protein belongs to the universal ribosomal protein uS17 family. As to quaternary structure, part of the 30S ribosomal subunit.

One of the primary rRNA binding proteins, it binds specifically to the 5'-end of 16S ribosomal RNA. The polypeptide is Small ribosomal subunit protein uS17 (Bradyrhizobium sp. (strain BTAi1 / ATCC BAA-1182)).